A 416-amino-acid chain; its full sequence is Probable intermembrane transport protein HI_1671 (416 aa).

The next 8 membrane-spanning stretches (helical) occupy residues 62–82 (ILIL…LLGI), 107–127 (IFIC…MLWL), 138–158 (VLLF…LVAL), 172–192 (EINI…LLFI), 263–283 (LIAG…GIYL), 306–326 (FVAF…IFIM), 347–367 (LLHL…VLAL), and 377–397 (IINF…FCTM).

This sequence belongs to the PqiA family.

It is found in the cell inner membrane. This Haemophilus influenzae (strain ATCC 51907 / DSM 11121 / KW20 / Rd) protein is Probable intermembrane transport protein HI_1671.